Here is a 416-residue protein sequence, read N- to C-terminus: POC1 centriolar protein homolog A (416 aa).

7 WD repeats span residues 16–55 (GHRDAITSLDFSPSGKQIASGSVDASVMVWNMKPQSRAYR), 58–97 (GHKDAVTCVQFSPSAHLLASSSRDKTVRLWVPSVKGESVL), 100–139 (AHTGSVRSVCFSADGQSLLTASDDQSIKLWSVHRQKIICT), 142–181 (EHNNWVRCARFSPDGQLMVSVSDDRTVKLWDASSRQLIHT), 184–223 (EPGGYSSYVDFHPSSTCIATASSDNTVRVWDIRTHTLLQH), 226–265 (VHSAAVNALSFHPSGNHLLTASSDSTLKILDLLEGRLLYT), and 268–307 (GHQGSASCVSFSRSGDQFASAGSDQQVMVWRTNFDSVDYS). Positions 311-340 (QQKRDHRTPSAQASGAAGDPESRSGQKTEV) are disordered. The stretch at 380-412 (QLDVLTQTVAILEQRLTLTEDKLKECLEQQHQA) forms a coiled coil.

This sequence belongs to the WD repeat POC1 family.

Its function is as follows. May play an important role in centriole assembly and/or stability and ciliogenesis. The protein is POC1 centriolar protein homolog A of Danio rerio (Zebrafish).